Consider the following 198-residue polypeptide: Large ribosomal subunit protein bL25 (198 aa).

The protein belongs to the bacterial ribosomal protein bL25 family. CTC subfamily. As to quaternary structure, part of the 50S ribosomal subunit; part of the 5S rRNA/L5/L18/L25 subcomplex. Contacts the 5S rRNA. Binds to the 5S rRNA independently of L5 and L18.

Its function is as follows. This is one of the proteins that binds to the 5S RNA in the ribosome where it forms part of the central protuberance. The chain is Large ribosomal subunit protein bL25 from Nitrosomonas europaea (strain ATCC 19718 / CIP 103999 / KCTC 2705 / NBRC 14298).